The chain runs to 72 residues: Translation initiation factor IF-1 (72 aa).

The S1-like domain maps to 1–72; the sequence is MSKEDSIEVT…TKGRITFRHR (72 aa).

Belongs to the IF-1 family. In terms of assembly, component of the 30S ribosomal translation pre-initiation complex which assembles on the 30S ribosome in the order IF-2 and IF-3, IF-1 and N-formylmethionyl-tRNA(fMet); mRNA recruitment can occur at any time during PIC assembly.

The protein localises to the cytoplasm. In terms of biological role, one of the essential components for the initiation of protein synthesis. Stabilizes the binding of IF-2 and IF-3 on the 30S subunit to which N-formylmethionyl-tRNA(fMet) subsequently binds. Helps modulate mRNA selection, yielding the 30S pre-initiation complex (PIC). Upon addition of the 50S ribosomal subunit IF-1, IF-2 and IF-3 are released leaving the mature 70S translation initiation complex. This is Translation initiation factor IF-1 from Solibacter usitatus (strain Ellin6076).